Here is a 155-residue protein sequence, read N- to C-terminus: Crossover junction endodeoxyribonuclease RuvC (155 aa).

Catalysis depends on residues Asp-7, Glu-68, and Asp-140. The Mg(2+) site is built by Asp-7, Glu-68, and Asp-140.

This sequence belongs to the RuvC family. In terms of assembly, homodimer which binds Holliday junction (HJ) DNA. The HJ becomes 2-fold symmetrical on binding to RuvC with unstacked arms; it has a different conformation from HJ DNA in complex with RuvA. In the full resolvosome a probable DNA-RuvA(4)-RuvB(12)-RuvC(2) complex forms which resolves the HJ. Mg(2+) serves as cofactor.

It localises to the cytoplasm. It carries out the reaction Endonucleolytic cleavage at a junction such as a reciprocal single-stranded crossover between two homologous DNA duplexes (Holliday junction).. Functionally, the RuvA-RuvB-RuvC complex processes Holliday junction (HJ) DNA during genetic recombination and DNA repair. Endonuclease that resolves HJ intermediates. Cleaves cruciform DNA by making single-stranded nicks across the HJ at symmetrical positions within the homologous arms, yielding a 5'-phosphate and a 3'-hydroxyl group; requires a central core of homology in the junction. The consensus cleavage sequence is 5'-(A/T)TT(C/G)-3'. Cleavage occurs on the 3'-side of the TT dinucleotide at the point of strand exchange. HJ branch migration catalyzed by RuvA-RuvB allows RuvC to scan DNA until it finds its consensus sequence, where it cleaves and resolves the cruciform DNA. In Prochlorococcus marinus (strain SARG / CCMP1375 / SS120), this protein is Crossover junction endodeoxyribonuclease RuvC.